The chain runs to 332 residues: Opticin (332 aa).

Positions 1–19 (MRLLAFLSLLALVLQETGT) are cleaved as a signal peptide. Positions 21-41 (SLPRKERKRREEQMPREGDSF) are disordered. A compositionally biased stretch (basic and acidic residues) spans 29–39 (RREEQMPREGD). Sulfotyrosine is present on residues Tyr65 and Tyr71. The tract at residues 86-106 (ATSISPAKSTTAPGTPSSNPT) is disordered. Residues 116-153 (LLSSQPNHGLPTCLVCVCLGSSVYCDDIDLEDIPPLPR) form the LRRNT domain. Tyr139 carries the post-translational modification Sulfotyrosine. 6 LRR repeats span residues 154–175 (RTAYLYARFNRISRIRAEDFKG), 178–199 (KLKRIDLSNNLISSIDNDAFRL), 202–223 (ALQDLILPENQLEALPVLPSGI), 248–269 (KLQFLYLSDNLLDSIPGPLPLS), 270–290 (LRSVHLQNNLIETMQRDVFCD), and 300–320 (QLEDIRLDGNPINLSLFPSAY). A disulfide bond links Cys289 and Cys322. A glycan (N-linked (GlcNAc...) asparagine) is linked at Asn312.

Belongs to the small leucine-rich proteoglycan (SLRP) family. SLRP class III subfamily. In terms of assembly, homodimer. Post-translationally, O-glycosylated. In terms of processing, proteolytically cleaved by MMP1, MMP2, MMP3, MMP7, MMP8, MMP9, ADAMTS4, and ADAMTS5. Proteolytically cleaved by MMP13. The degradation of OPTC by proteases may contribute to osteoarthritis pathophysiology. Sulfated on tyrosine residues. In terms of tissue distribution, expressed in cartilage and synovial membranes (at protein level). Expressed in the retina, iris, ligament, skin and fetal liver (at protein level). Expressed in the retinal pigment epithelium (at protein level). Expressed in synovial fibroblasts and subchondral bone osteoblasts.

It is found in the secreted. The protein localises to the extracellular space. The protein resides in the extracellular matrix. Its function is as follows. Inhibits angiogenesis in the vitreous humor of the eye, and therefore represses neovascularization. Binds collagen fibrils. May be involved in collagen fiber organization via regulation of other members of the small leucine-rich repeat proteoglycan superfamily. The chain is Opticin (OPTC) from Homo sapiens (Human).